The following is a 1364-amino-acid chain: Formin-like protein 6 (1364 aa).

One can recognise a Phosphatase tensin-type domain in the interval 9–193; it reads YRKPPDGLLE…HYISRRNVSA (185 aa). The active-site Phosphocysteine intermediate is Cys126. The C2 tensin-type domain occupies 199-338; that stretch reads DRALTLDCVI…FRAEVLFSEM (140 aa). 3 disordered regions span residues 614–934, 976–999, and 1317–1364; these read KCTP…NLKP, VLPS…KPEK, and EAEA…ASAK. Residues 617–631 are compositionally biased toward pro residues; that stretch reads PSPPPLLPPLAPVVP. Polar residues predominate over residues 657-690; the sequence is SFPSLSPTQQKQSTSKLCQTILPTNHQLSSSNIT. A compositionally biased stretch (pro residues) spans 734-743; it reads PPAPPPPPLQ. Positions 744–757 are enriched in low complexity; that stretch reads SPSTPRCSPVRTLA. 2 stretches are compositionally biased toward pro residues: residues 774-813 and 856-865; these read GPPP…PAAP and PSPPPPPPPC. Over residues 916–929 the composition is skewed to polar residues; that stretch reads MSRSLQSGQAASRR. The 401-residue stretch at 922–1322 folds into the FH2 domain; sequence SGQAASRRSN…KALKEAEAEK (401 aa). Over residues 1317-1351 the composition is skewed to basic and acidic residues; the sequence is EAEAEKTKKEPENAQKTKEPGNDKAKHNNSIKELD. Over residues 1353 to 1364 the composition is skewed to polar residues; that stretch reads SLQSPAQTASAK.

The protein belongs to the formin-like family. Class-II subfamily.

This Oryza sativa subsp. japonica (Rice) protein is Formin-like protein 6 (FH6).